The primary structure comprises 671 residues: UvrABC system protein B (671 aa).

One can recognise a Helicase ATP-binding domain in the interval 25 to 412 (EGIEAGLSHQ…AGRVVEQVVR (388 aa)). Position 38 to 45 (38 to 45 (GVTGSGKT)) interacts with ATP. The Beta-hairpin motif lies at 91-114 (YYDYYQPEAYVPSSDTFIEKDASI). One can recognise a Helicase C-terminal domain in the interval 429-582 (QVDDLLSEIR…QIAFNEANGI (154 aa)). The 36-residue stretch at 632-667 (TKRIKQLEEKMMQFARDLEFEAAAQLRDEIAQLRER) folds into the UVR domain.

It belongs to the UvrB family. Forms a heterotetramer with UvrA during the search for lesions. Interacts with UvrC in an incision complex.

The protein resides in the cytoplasm. Functionally, the UvrABC repair system catalyzes the recognition and processing of DNA lesions. A damage recognition complex composed of 2 UvrA and 2 UvrB subunits scans DNA for abnormalities. Upon binding of the UvrA(2)B(2) complex to a putative damaged site, the DNA wraps around one UvrB monomer. DNA wrap is dependent on ATP binding by UvrB and probably causes local melting of the DNA helix, facilitating insertion of UvrB beta-hairpin between the DNA strands. Then UvrB probes one DNA strand for the presence of a lesion. If a lesion is found the UvrA subunits dissociate and the UvrB-DNA preincision complex is formed. This complex is subsequently bound by UvrC and the second UvrB is released. If no lesion is found, the DNA wraps around the other UvrB subunit that will check the other stand for damage. The chain is UvrABC system protein B from Pseudomonas putida (strain ATCC 47054 / DSM 6125 / CFBP 8728 / NCIMB 11950 / KT2440).